A 63-amino-acid polypeptide reads, in one-letter code: Small ribosomal subunit protein eS17 (63 aa).

It belongs to the eukaryotic ribosomal protein eS17 family.

In Methanococcus maripaludis (strain C7 / ATCC BAA-1331), this protein is Small ribosomal subunit protein eS17.